The sequence spans 244 residues: Phosphatidylinositol phosphate synthase (244 aa).

A run of 3 helical transmembrane segments spans residues Y24–R42, T49–Y66, and F72–M91. An a CDP-1,2-diacyl-sn-glycerol-binding site is contributed by D48–T51. Mg(2+) is bound by residues D85 and D88. Residues G89, R93, and S99 each contribute to the a CDP-1,2-diacyl-sn-glycerol site. The Mg(2+) site is built by D106 and D110. The active-site Proton acceptor is the D110. Transmembrane regions (helical) follow at residues I117–V137, L174–G190, and V196–I214.

This sequence belongs to the CDP-alcohol phosphatidyltransferase class-I family. As to quaternary structure, homodimer. Mg(2+) serves as cofactor.

The protein localises to the cell membrane. It catalyses the reaction a CDP-1,2-diacyl-sn-glycerol + 1D-myo-inositol 3-phosphate = a 1,2-diacyl-sn-glycero-3-phospho-(1D-myo-inositol-3-phosphate) + CMP + H(+). The enzyme catalyses 1,2-di-(9Z-octadecenoyl)-sn-glycero-3-cytidine-5'-diphosphate + 1D-myo-inositol 3-phosphate = 1,2-di-(9Z-octadecenoyl)-sn-glycero-3-phospho-(1D-myo-inositol-3-phosphate) + CMP + H(+). The protein operates within phospholipid metabolism; phosphatidylinositol phosphate biosynthesis. In terms of biological role, catalyzes the conjugation of the 1'-hydroxyl group of D-myo-inositol-3-phosphate (also named L-myo-inositol-1-phosphate) with a lipid tail of cytidine diphosphate diacylglycerol (CDP-DAG), forming phosphatidylinositol phosphate (PIP) and CMP. PIP is a precursor of phosphatidylinositol (PI) which is an essential lipid required for cell wall formation. This is Phosphatidylinositol phosphate synthase from Streptomyces avermitilis (strain ATCC 31267 / DSM 46492 / JCM 5070 / NBRC 14893 / NCIMB 12804 / NRRL 8165 / MA-4680).